A 276-amino-acid chain; its full sequence is Energy-coupling factor transporter ATP-binding protein EcfA1 (276 aa).

Residues isoleucine 2–aspartate 237 form the ABC transporter domain. Glycine 37–serine 44 contacts ATP.

It belongs to the ABC transporter superfamily. Energy-coupling factor EcfA family. As to quaternary structure, forms a stable energy-coupling factor (ECF) transporter complex composed of 2 membrane-embedded substrate-binding proteins (S component), 2 ATP-binding proteins (A component) and 2 transmembrane proteins (T component).

Its subcellular location is the cell membrane. ATP-binding (A) component of a common energy-coupling factor (ECF) ABC-transporter complex. Unlike classic ABC transporters this ECF transporter provides the energy necessary to transport a number of different substrates. This is Energy-coupling factor transporter ATP-binding protein EcfA1 from Streptococcus thermophilus (strain ATCC BAA-491 / LMD-9).